The primary structure comprises 49 residues: Large ribosomal subunit protein bL33 (49 aa).

It belongs to the bacterial ribosomal protein bL33 family.

The chain is Large ribosomal subunit protein bL33 from Alkaliphilus metalliredigens (strain QYMF).